A 422-amino-acid polypeptide reads, in one-letter code: MSSQVVGIEPLYIKAEPASPDSPKGSSETETEPPVTLASGPAPARCLPGHKEEEDGEGAGSGEQGSGKLVLSSLPKRLCLVCGDVASGYHYGVASCEACKAFFKRTIQGSIEYSCPASNECEITKRRRKACQACRFTKCLRVGMLKEGVRLDRVRGGRQKYKRRPEVDPLPFPGPFPAGPLAVAGGPRKTAPVNALVSHLLVVEPEKLYAMPDPASPDGHLPAVATLCDLFDREIVVTISWAKSIPGFSSLSLSDQMSVLQSVWMEVLVLGVAQRSLPLQDELAFAEDLVLDEEGARAAGLGDLGAALLQLVRRLQALRLEREEYVLLKALALANSDSVHIEDAEAVEQLREALHEALLEYEAGRAGPGGGAERRRAGRLLLTLPLLRQTAGKVLAHFYGVKLEGKVPMHKLFLEMLEAMMD.

The disordered stretch occupies residues 1–66 (MSSQVVGIEP…EGAGSGEQGS (66 aa)). Residues 1-76 (MSSQVVGIEP…GKLVLSSLPK (76 aa)) are repressor domain. K14 is covalently cross-linked (Glycyl lysine isopeptide (Lys-Gly) (interchain with G-Cter in SUMO)). S19 and S22 each carry phosphoserine. Residues 76 to 151 (KRLCLVCGDV…VGMLKEGVRL (76 aa)) constitute a DNA-binding region (nuclear receptor). 2 consecutive NR C4-type zinc fingers follow at residues 79–99 (CLVC…CEAC) and 115–134 (CPAS…CQAC). Residues K129, K138, K160, and K162 each carry the N6-acetyllysine; by PCAF/KAT2B modification. K189 is covalently cross-linked (Glycyl lysine isopeptide (Lys-Gly) (interchain with G-Cter in SUMO2)). In terms of domain architecture, NR LBD spans 192–420 (PVNALVSHLL…KLFLEMLEAM (229 aa)). K402 participates in a covalent cross-link: Glycyl lysine isopeptide (Lys-Gly) (interchain with G-Cter in SUMO); alternate. Residue K402 forms a Glycyl lysine isopeptide (Lys-Gly) (interchain with G-Cter in SUMO2); alternate linkage. The tract at residues 402–422 (KLEGKVPMHKLFLEMLEAMMD) is AF-2 domain.

It belongs to the nuclear hormone receptor family. NR3 subfamily. As to quaternary structure, binds DNA as a monomer or a homodimer. Interacts (via the AF2 domain) with coactivator PPARGC1A (via the L3 motif); the interaction greatly enhances transcriptional activity of genes involved in energy metabolism. Interacts with PIAS4; the interaction enhances sumoylation. Interacts with MAPK15; promotes re-localization of ESRRA to the cytoplasm through a XPO1-dependent mechanism then inhibits ESRRA transcriptional activity. Phosphorylation on Ser-19 enhances sumoylation on Lys-14 increasing repression of transcriptional activity. Post-translationally, sumoylated with SUMO2. Main site is Lys-14 which is enhanced by phosphorylation on Ser-19, cofactor activation, and by interaction with PIAS4. Sumoylation enhances repression of transcriptional activity, but has no effect on subcellular location nor on DNA binding. In terms of processing, reversibly acetylated. Acetylation by PCAF/KAT2 at Lys-129, Lys-138, Lys-160 and Lys-162 and PCAF/KAT2 decreases transcriptional activity probably by inhibiting DNA-binding activity; deacetylation involves SIRT1 and HDAC8 and increases DNA-binding. Most highly expressed in kidney, heart, and brown adipocytes. Also found in uterus, cervix and vagina.

The protein localises to the nucleus. It is found in the cytoplasm. Its function is as follows. Binds to an ERR-alpha response element (ERRE) containing a single consensus half-site, 5'-TNAAGGTCA-3'. Can bind to the medium-chain acyl coenzyme A dehydrogenase (MCAD) response element NRRE-1 and may act as an important regulator of MCAD promoter. Binds to the C1 region of the lactoferrin gene promoter. Requires dimerization and the coactivator, PGC-1A, for full activity. The ERRalpha/PGC1alpha complex is a regulator of energy metabolism. Induces the expression of PERM1 in the skeletal muscle. The sequence is that of Steroid hormone receptor ERR1 (Esrra) from Mus musculus (Mouse).